Reading from the N-terminus, the 1112-residue chain is Lysylphosphatidylglycerol biosynthesis bifunctional protein LysX (1112 aa).

The interval M1–D613 is phosphatidylglycerol lysyltransferase. 7 helical membrane-spanning segments follow: residues V18–V38, F60–A80, I84–L104, V118–F138, G152–F172, V209–F229, and A308–G328. The lysine--tRNA ligase stretch occupies residues M614 to R1112. A DNA-binding region (OB) is located at residues V675–W748. Residues D1024 and E1031 each contribute to the Mg(2+) site.

This sequence in the N-terminal section; belongs to the LPG synthetase family. It in the C-terminal section; belongs to the class-II aminoacyl-tRNA synthetase family. The cofactor is Mg(2+).

The protein resides in the cell membrane. The enzyme catalyses tRNA(Lys) + L-lysine + ATP = L-lysyl-tRNA(Lys) + AMP + diphosphate. It catalyses the reaction L-lysyl-tRNA(Lys) + a 1,2-diacyl-sn-glycero-3-phospho-(1'-sn-glycerol) = a 1,2-diacyl-sn-glycero-3-phospho-1'-(3'-O-L-lysyl)-sn-glycerol + tRNA(Lys). In terms of biological role, catalyzes the production of L-lysyl-tRNA(Lys)transfer and the transfer of a lysyl group from L-lysyl-tRNA(Lys) to membrane-bound phosphatidylglycerol (PG), which produces lysylphosphatidylglycerol (LPG), one of the components of the bacterial membrane with a positive net charge. LPG synthesis contributes to the resistance to cationic antimicrobial peptides (CAMPs) and likely protects M.tuberculosis against the CAMPs produced by competiting microorganisms (bacteriocins). In fact, the modification of anionic phosphatidylglycerol with positively charged L-lysine results in repulsion of the peptides. This is Lysylphosphatidylglycerol biosynthesis bifunctional protein LysX (lysX) from Mycobacterium sp. (strain KMS).